Here is an 878-residue protein sequence, read N- to C-terminus: Lon protease 2 (878 aa).

The 197-residue stretch at 85–281 folds into the Lon N-terminal domain; the sequence is LYLLPVKERP…KVLSLFKHEI (197 aa). An ATP-binding site is contributed by 434–441; that stretch reads GPPGVGKT. In terms of domain architecture, Lon proteolytic spans 668 to 850; the sequence is NQQMGTVTGL…DDVAKLTFHI (183 aa). Catalysis depends on residues Ser756 and Lys799.

It belongs to the peptidase S16 family. Homohexamer. Organized in a ring with a central cavity.

It localises to the cytoplasm. The enzyme catalyses Hydrolysis of proteins in presence of ATP.. Its function is as follows. ATP-dependent serine protease that mediates the selective degradation of mutant and abnormal proteins as well as certain short-lived regulatory proteins. Required for cellular homeostasis and for survival from DNA damage and developmental changes induced by stress. Degrades polypeptides processively to yield small peptide fragments that are 5 to 10 amino acids long. Binds to DNA in a double-stranded, site-specific manner. In Hydrogenovibrio crunogenus (strain DSM 25203 / XCL-2) (Thiomicrospira crunogena), this protein is Lon protease 2.